A 429-amino-acid polypeptide reads, in one-letter code: Enolase (429 aa).

A (2R)-2-phosphoglycerate-binding site is contributed by Q162. The active-site Proton donor is the E204. Mg(2+) is bound by residues D242, E289, and D316. Residues K341, R370, S371, and K392 each coordinate (2R)-2-phosphoglycerate. The active-site Proton acceptor is the K341.

The protein belongs to the enolase family. The cofactor is Mg(2+).

The protein resides in the cytoplasm. It localises to the secreted. It is found in the cell surface. The enzyme catalyses (2R)-2-phosphoglycerate = phosphoenolpyruvate + H2O. It functions in the pathway carbohydrate degradation; glycolysis; pyruvate from D-glyceraldehyde 3-phosphate: step 4/5. Its function is as follows. Catalyzes the reversible conversion of 2-phosphoglycerate (2-PG) into phosphoenolpyruvate (PEP). It is essential for the degradation of carbohydrates via glycolysis. The sequence is that of Enolase from Flavobacterium psychrophilum (strain ATCC 49511 / DSM 21280 / CIP 103535 / JIP02/86).